Consider the following 1855-residue polypeptide: Unconventional myosin-Va (1855 aa).

Residue Ala2 is modified to N-acetylalanine. Positions 8–60 (TKFARVWIPDPEEVWKSAELLKDYKPGDKVLLLHLEEGKDLEYHLDPKTKELP) constitute a Myosin N-terminal SH3-like domain. The region spanning 69 to 763 (VGENDLTALS…QVAYLEKLRA (695 aa)) is the Myosin motor domain. Position 163-170 (163-170 (GESGAGKT)) interacts with ATP. The tract at residues 598–631 (AISPTSATSSGRTPLTRTPAKPTKGRPGQMAKEH) is disordered. Residue Ser600 is modified to Phosphoserine. Residues 600-613 (SPTSATSSGRTPLT) are compositionally biased toward polar residues. Residues 643-665 (LHLLMETLNATTPHYVRCIKPND) are actin-binding. IQ domains lie at 766–788 (LRAA…KYLR), 789–818 (MRKA…TKAA), 814–836 (RTKA…RYKI), 837–861 (RRAA…RKIL), 862–883 (REHK…THYK), and 885–914 (SMHA…EARS). Coiled coils occupy residues 914 to 1237 (SVER…APEV) and 1338 to 1445 (VYEG…ELEV). A Phosphothreonine modification is found at Thr1032. Phosphoserine occurs at positions 1452 and 1652. The region spanning 1534–1810 (TSTINSIKKV…IRTIQMRLRD (277 aa)) is the Dilute domain. Thr1760 is modified (phosphothreonine).

The protein belongs to the TRAFAC class myosin-kinesin ATPase superfamily. Myosin family. In terms of assembly, may be a homodimer, which associates with multiple calmodulin or myosin light chains. Interacts with RIPL2, the interaction is required for its role in dendrite formation. Interacts with MLPH. Interacts with SYTL4. Interacts with MYRIP. Interacts with RAB10; mediates the transport to the plasma membrane of SLC2A4/GLUT4 storage vesicles. Interacts with FMR1; this interaction occurs in association with polyribosome. Detected in melanocytes.

The enzyme catalyses ATP + H2O = ADP + phosphate + H(+). Functionally, processive actin-based motor that can move in large steps approximating the 36-nm pseudo-repeat of the actin filament. Can hydrolyze ATP in the presence of actin, which is essential for its function as a motor protein. Involved in melanosome transport. Also mediates the transport of vesicles to the plasma membrane. May also be required for some polarization process involved in dendrite formation. This Homo sapiens (Human) protein is Unconventional myosin-Va (MYO5A).